Consider the following 416-residue polypeptide: Deferrochelatase (416 aa).

Positions 1–28 (MSDEQKKPEQIHRRDILKWGAMAGAAVA) form a signal peptide, tat-type signal. 241–243 (GTG) provides a ligand contact to heme b. Residues 293–318 (QEDTFGRRKSSGAPFGQKKETDPVKL) are disordered. Heme b contacts are provided by His-326 and Arg-339.

The protein belongs to the DyP-type peroxidase family. In terms of assembly, component of the iron transporter efeUOB/M complex composed of EfeU, EfeM and EfeB; EfeU is essential for the complex formation. Requires heme b as cofactor. Post-translationally, exported by the Tat system. The position of the signal peptide cleavage has not been experimentally proven.

It is found in the secreted. The protein resides in the cell membrane. The enzyme catalyses heme b + 2 H(+) = protoporphyrin IX + Fe(2+). The catalysed reaction is 2 Fe(2+) + H2O2 + 2 H(+) = 2 Fe(3+) + 2 H2O. Its function is as follows. Involved in the recovery of exogenous heme iron. Extracts iron from heme while preserving the protoporphyrin ring intact. Part of the iron transporter system efeUOB/M involved in iron import. Catalyzes the peroxide-mediated oxidation of Fe(2+) into Fe(3+); EfeM binds Fe(3+) and delivers it to the cell membrane permease EfeU. This is Deferrochelatase from Bacillus subtilis (strain 168).